Here is an 87-residue protein sequence, read N- to C-terminus: Small ribosomal subunit protein uS17 (87 aa).

The protein belongs to the universal ribosomal protein uS17 family. In terms of assembly, part of the 30S ribosomal subunit.

Its function is as follows. One of the primary rRNA binding proteins, it binds specifically to the 5'-end of 16S ribosomal RNA. This is Small ribosomal subunit protein uS17 from Aster yellows witches'-broom phytoplasma (strain AYWB).